Consider the following 160-residue polypeptide: MSETMQSLDQLAALKTTVTGADAPTYTKKVDKFGRAYATGKRKDAVARVWIKPGAGKITVNSREVETYFARPVLRMMIQQPLVAAARAGQYDVICTVAGGGLSGQAGAVRHGISKALTNFEPELRSVLKKGGFLTRDSRVVERKKYGKAKARRSFQFSKR.

Belongs to the universal ribosomal protein uS9 family.

The protein is Small ribosomal subunit protein uS9 of Rhodopseudomonas palustris (strain ATCC BAA-98 / CGA009).